A 119-amino-acid polypeptide reads, in one-letter code: Beta-2-microglobulin (119 aa).

Residues 1-20 (MGRFVAVALLVLLSLSGLET) form the signal peptide. Residues 25 to 114 (PKIQVYSRHP…VTFSTPKTVK (90 aa)) enclose the Ig-like C1-type domain. The cysteines at positions 45 and 100 are disulfide-linked.

This sequence belongs to the beta-2-microglobulin family. As to quaternary structure, heterodimer of an alpha chain and a beta chain. Beta-2-microglobulin is the beta-chain of major histocompatibility complex class I molecules.

The protein resides in the secreted. In terms of biological role, component of the class I major histocompatibility complex (MHC). Involved in the presentation of peptide antigens to the immune system. The chain is Beta-2-microglobulin (B2M) from Callicebus personatus nigrifrons (Black-fronted titi).